The sequence spans 306 residues: tRNA pseudouridine synthase B (306 aa).

The active-site Nucleophile is aspartate 48.

Belongs to the pseudouridine synthase TruB family. Type 1 subfamily.

The catalysed reaction is uridine(55) in tRNA = pseudouridine(55) in tRNA. Its function is as follows. Responsible for synthesis of pseudouridine from uracil-55 in the psi GC loop of transfer RNAs. The protein is tRNA pseudouridine synthase B of Ectopseudomonas mendocina (strain ymp) (Pseudomonas mendocina).